Consider the following 37-residue polypeptide: Large ribosomal subunit protein bL36 (37 aa).

Belongs to the bacterial ribosomal protein bL36 family.

This chain is Large ribosomal subunit protein bL36, found in Acetivibrio thermocellus (strain ATCC 27405 / DSM 1237 / JCM 9322 / NBRC 103400 / NCIMB 10682 / NRRL B-4536 / VPI 7372) (Clostridium thermocellum).